A 368-amino-acid polypeptide reads, in one-letter code: Quinolinate synthase (368 aa).

Iminosuccinate-binding residues include H46 and S63. Position 110 (C110) interacts with [4Fe-4S] cluster. Iminosuccinate contacts are provided by residues 141-143 (YVN) and S162. Position 230 (C230) interacts with [4Fe-4S] cluster. Iminosuccinate-binding positions include 256–258 (HPE) and T273. C320 is a binding site for [4Fe-4S] cluster.

It belongs to the quinolinate synthase family. Type 3 subfamily. The cofactor is [4Fe-4S] cluster.

The protein localises to the cytoplasm. It carries out the reaction iminosuccinate + dihydroxyacetone phosphate = quinolinate + phosphate + 2 H2O + H(+). It functions in the pathway cofactor biosynthesis; NAD(+) biosynthesis; quinolinate from iminoaspartate: step 1/1. In terms of biological role, catalyzes the condensation of iminoaspartate with dihydroxyacetone phosphate to form quinolinate. The polypeptide is Quinolinate synthase (Bacillus cereus (strain G9842)).